An 886-amino-acid chain; its full sequence is DNA double-strand break repair Rad50 ATPase (886 aa).

ATP-binding positions include 32-38 (NGAGKSS) and Q137. Coiled-coil stretches lie at residues 181–240 (IRSL…KEIK) and 320–416 (RKKE…GDLN). The 99-residue stretch at 391-489 (IKDVSDRINQ…EREELEATRN (99 aa)) folds into the Zinc-hook domain. C437 and C440 together coordinate Zn(2+). Coiled coils occupy residues 450–657 (AKIR…ISEL) and 682–718 (EADK…EESK).

Belongs to the SMC family. RAD50 subfamily. Homodimer. Forms a heterotetramer composed of two Mre11 subunits and two Rad50 subunits. Interacts with Mre11 and HerA. It depends on Zn(2+) as a cofactor.

Part of the Rad50/Mre11 complex, which is involved in the early steps of DNA double-strand break (DSB) repair. The complex may facilitate opening of the processed DNA ends to aid in the recruitment of HerA and NurA. Rad50 controls the balance between DNA end bridging and DNA resection via ATP-dependent structural rearrangements of the Rad50/Mre11 complex. The chain is DNA double-strand break repair Rad50 ATPase from Sulfolobus acidocaldarius (strain ATCC 33909 / DSM 639 / JCM 8929 / NBRC 15157 / NCIMB 11770).